Here is a 507-residue protein sequence, read N- to C-terminus: ATP synthase subunit alpha, chloroplastic (507 aa).

170 to 177 (GDRQTGKT) lines the ATP pocket.

Belongs to the ATPase alpha/beta chains family. In terms of assembly, F-type ATPases have 2 components, CF(1) - the catalytic core - and CF(0) - the membrane proton channel. CF(1) has five subunits: alpha(3), beta(3), gamma(1), delta(1), epsilon(1). CF(0) has four main subunits: a, b, b' and c.

The protein resides in the plastid. Its subcellular location is the chloroplast thylakoid membrane. It catalyses the reaction ATP + H2O + 4 H(+)(in) = ADP + phosphate + 5 H(+)(out). Functionally, produces ATP from ADP in the presence of a proton gradient across the membrane. The alpha chain is a regulatory subunit. The polypeptide is ATP synthase subunit alpha, chloroplastic (Manihot esculenta (Cassava)).